Consider the following 350-residue polypeptide: Bifunctional methylenetetrahydrofolate dehydrogenase/cyclohydrolase, mitochondrial (350 aa).

The transit peptide at 1–35 (MAAASFITSLVTRLLRSAQSGRLHQRPFHLSAVRN) directs the protein to the mitochondrion. An N6-acetyllysine; alternate modification is found at lysine 50. A Glycyl lysine isopeptide (Lys-Gly) (interchain with G-Cter in SUMO2); alternate cross-link involves residue lysine 50. Substrate-binding positions include 84-88 (YVLNK) and 131-133 (VQL). NAD(+)-binding positions include 200 to 202 (GRS) and arginine 233. Substrate is bound at residue 309-313 (PGGVG).

It belongs to the tetrahydrofolate dehydrogenase/cyclohydrolase family. In terms of assembly, homodimer. Requires Mg(2+) as cofactor.

Its subcellular location is the mitochondrion. It catalyses the reaction (6R)-5,10-methylene-5,6,7,8-tetrahydrofolate + NAD(+) = (6R)-5,10-methenyltetrahydrofolate + NADH. It carries out the reaction (6R)-5,10-methenyltetrahydrofolate + H2O = (6R)-10-formyltetrahydrofolate + H(+). Although its dehydrogenase activity is NAD-specific, it can also utilize NADP at a reduced efficiency. This Bos taurus (Bovine) protein is Bifunctional methylenetetrahydrofolate dehydrogenase/cyclohydrolase, mitochondrial (MTHFD2).